Here is a 687-residue protein sequence, read N- to C-terminus: MMTQTLLIELLTEELPPKALNNLGNHFAAAVAEGLEKAQLVDGAAEYTAYASPRRLAVQVKNVKAVQADQKIVKKGPAVANAVKDGAPTKALEGFARGAGAKIEDLTIVHDGKQDVYAYEYVQTGKLLGELLEDIINAAVKKLPIPKVMRWGSSTFTFVRPVHGLIVLHGGDIVNVSVLGLQSGNKTLGHRFLSDGEITIENADSYAEQMREQGKVVASFAERKAAIQTALEGQARRLNAAVAADEALLDEVTALVEWPVVLEAGFEEHFLAVPQECLILTMQQNQKYFPLLDQNGKLMNRFLLVSNLQTEDPSHIIQGNERVLRARLSDAEFFYKQDQKATLESRLPKLSGVVYHNKIGSQAERIERLQSIAAHIAKALGADAAAAERAARLAKADLVTEMVGEFPELQGTMGKYYARLDGETEEIAEAVEQHYQPRFAGDKLPESKIATAVALADKLETLVGIWGIGLIPTSDKDPYALRRSALGILRMLMQYGLDVNELIQTAFDSFPKGLLNEKTPSETADFMQARLAVLLQNDYPQDIVAAVLAKQPRRLDDVVAKLQAVASFKQLPEAAALAAANKRVQNLLKKADAELGVVNESLLQQDEEKALFAAAQGLQPKIAAAVAEGNFQTALSELASVKPQVDAFFDGVMVMAEDAAVKQNRLNLLNRLAEQMNAVADIALLGE.

The protein belongs to the class-II aminoacyl-tRNA synthetase family. Tetramer of two alpha and two beta subunits.

It localises to the cytoplasm. The catalysed reaction is tRNA(Gly) + glycine + ATP = glycyl-tRNA(Gly) + AMP + diphosphate. The polypeptide is Glycine--tRNA ligase beta subunit (Neisseria meningitidis serogroup A / serotype 4A (strain DSM 15465 / Z2491)).